The primary structure comprises 1178 residues: MKFGKYLEARQLELAEYNSHFIDYKALKKLIKQLAIPTLKASSDLDLHLTLDDIDEKIIHQRLQENKAAFFFKLERELEKVNGYYLARESDLRIKFNILHSKYKDYKINGKLNSNQATSFKNLYAAFKKFQKDLRNLEQYVELNKTGFSKALKKWDKRSQSHDKDFYLATVVSIQPIFTRDGPLKLNDETLHILLELNDIDNNNRRADIQSSTFTNDDDDDNNTSNNNKHNNNNNNNNNNNNNNNNNNILHNNYELTTSKISENQLEHLFQASSSSLDMEMEIENWYKEILNIATVKDVQRKHALLRNFRETKIFTYLLQNSSESFHKNVFSLLKECLTTLFLLLVASPLDDNSLHIFYKSNQDHIDLSYCDEDDQVFSRKNVFHEAASCPEKSRLFILDEALTTSKLSKETVQKLLNAQDIHSRVPLHYAAELGKLEFVHSLLITNLLEDVDPIDSDSKTPLVLAITNNHIDVVRDLLTIGGANASPIEKPILDYSKNVISSTKVQFDPLNVACKFNNHDAAKLLLEIRSKQNADNAKNKSSQHLCQPLFKKNSTGLCTLHIVAKIGGDPQLIQLLIRYGADPNEIDGFNKWTPIFYAVRSGHSEVITELLKHNARLDIEDDNGHSPLFYALWESHVDVLNALLQRPLNLPSAPLNEINSQSSTQRLNTIDLTPNDDKFDLDIQDSIPDFALPPPIIPLRKYGHNFLEKKIFIKLKLRPGLESIKLTQDNGIIMSSSPGRITLSSNLPEIIPRNVILPVRSGEINNFCKDISETNDEEDDDEISEDHDDGEIIFQVDSIDDFSMDFEIFPSFGTRIIAKTTAMPFLFKKVAINSIATMNLPLFDTRLNNIGSLTLDYQIIFPYPGNPLKIINYEPYWKSTGSDLMTSSKDGNFVTSSSLNGSFISVLVCALNDETIVAAPKPYVEFKGTKILLNDLTKEQLEKVVDYDFGKIDGSFDEVTLKQYLSSRVVPLRSLLEVIPGSAQLVIRVYFPTDKEIDTIPIKISPFININQFIDKLLLIIFEHERFLRHSGSGSMRQIVFSSCNWEACSILNWKQPNFPVLLQMKNLLRDSTTGKFVGDTPNCLKELAVNPQKMSYLNTELINIHTMVQFAMNNNLLGVTLPYEVLKICPSLARIIKQNGLLLIASVGENDQIPADGGYSGIYYACELLFENNIDM.

Residues 1–169 (MKFGKYLEAR…QSHDKDFYLA (169 aa)) form the SPX domain. A disordered region spans residues 210-250 (QSSTFTNDDDDDNNTSNNNKHNNNNNNNNNNNNNNNNNNIL). Positions 223–250 (NTSNNNKHNNNNNNNNNNNNNNNNNNIL) are enriched in low complexity. 6 ANK repeats span residues 423 to 452 (HSRV…LEDV), 458 to 487 (DSKT…ANAS), 506 to 535 (VQFD…KQNA), 556 to 586 (TGLC…DPNE), 591 to 620 (NKWT…RLDI), and 624 to 653 (NGHS…NLPS). Positions 871–1178 (IINYEPYWKS…ELLFENNIDM (308 aa)) constitute a GP-PDE domain. Ser956 is subject to Phosphoserine.

In terms of assembly, associates specifically with the PHO80-PHO85 and PCL7-PHO85 cyclin-CDK complexes, and much of this interaction is mediated through the PHO80 and PCL7 cyclin subunits. Interacts with the transcription factor PHO4. Post-translationally, phosphorylated by the cyclin-CDK PHO80-PHO85. Phosphorylation mediates the formation of a stable interaction with the cyclin-CDK and is required for function as an active inhibitor of the complex under phosphate starvation conditions.

The protein resides in the cytoplasm. It is found in the nucleus. In terms of biological role, inhibits the kinase activity of the cyclin-CDKs PHO80-PHO85 and PCL7-PHO85 under low-phosphate conditions. In Saccharomyces cerevisiae (strain ATCC 204508 / S288c) (Baker's yeast), this protein is Phosphate system positive regulatory protein PHO81 (PHO81).